The sequence spans 25 residues: LASP1 neighbor protein (25 aa).

The helical transmembrane segment at 4–24 threads the bilayer; that stretch reads IFILMFFAIIGLVILSYIIYL.

The protein resides in the membrane. Its function is as follows. May play a key role in the skin fibroblasts (FBs)-keratinocyte-like cells (KLCs). This chain is LASP1 neighbor protein, found in Homo sapiens (Human).